The primary structure comprises 395 residues: Protein UNIFOLIATA (395 aa).

2 disordered regions span residues 147–170 (SQEG…GGGS) and 185–223 (QIRR…GERQ). Positions 202–211 (EEGEEEEEDN) are enriched in acidic residues. 3 consecutive DNA-binding regions follow at residues 224 to 228 (REHPF), 293 to 300 (NKPKMRHY), and 364 to 367 (YGPT).

This sequence belongs to the FLO/LFY family. As to expression, highly expressed in leaf, leaflet, inflorescence and lateral shoot primordia on the main shoot axis, and in floral organ and carpel primordia.

Its subcellular location is the nucleus. May regulate indeterminacy during leaf and flower development. This Pisum sativum (Garden pea) protein is Protein UNIFOLIATA (UNI).